Consider the following 469-residue polypeptide: 3-isopropylmalate dehydratase large subunit (469 aa).

3 residues coordinate [4Fe-4S] cluster: Cys349, Cys410, and Cys413.

It belongs to the aconitase/IPM isomerase family. LeuC type 1 subfamily. In terms of assembly, heterodimer of LeuC and LeuD. [4Fe-4S] cluster is required as a cofactor.

It carries out the reaction (2R,3S)-3-isopropylmalate = (2S)-2-isopropylmalate. It functions in the pathway amino-acid biosynthesis; L-leucine biosynthesis; L-leucine from 3-methyl-2-oxobutanoate: step 2/4. Functionally, catalyzes the isomerization between 2-isopropylmalate and 3-isopropylmalate, via the formation of 2-isopropylmaleate. This chain is 3-isopropylmalate dehydratase large subunit, found in Neisseria meningitidis serogroup C (strain 053442).